Here is a 309-residue protein sequence, read N- to C-terminus: MITFLPTIFSILVVVIFVIGNFGNGFIALVNSIEWVKRQKISFADQILTALAVSRVGLLWALLLNWYSTVFNPAFYSVGVRTTVYDVWTVTGHFSNWLATSLSIFYLLKIANFSNLIFLHLKRRVKSVILVMLLGPLLFLACQLFVINMKEILRTKEYEGNMTWKIKLRSAMYLSDATITTLANLVPFTLTLLSFLLLICSLCKHLNKMQLHGKGSQDPSTKVHIKVLQTVISFLLLCAIYFLSIMISVWSFGSLENKPVFMFCKAIRFSYPSIHPFILIWGNKKLKQTFLSVLRQVRYWVKGEKPSSP.

The Extracellular segment spans residues 1 to 2; that stretch reads MI. Residues 3–23 form a helical membrane-spanning segment; that stretch reads TFLPTIFSILVVVIFVIGNFG. Over 24–55 the chain is Cytoplasmic; the sequence is NGFIALVNSIEWVKRQKISFADQILTALAVSR. The helical transmembrane segment at 56–76 threads the bilayer; sequence VGLLWALLLNWYSTVFNPAFY. Over 77-100 the chain is Extracellular; sequence SVGVRTTVYDVWTVTGHFSNWLAT. A helical membrane pass occupies residues 101 to 121; that stretch reads SLSIFYLLKIANFSNLIFLHL. The Cytoplasmic portion of the chain corresponds to 122–126; that stretch reads KRRVK. Residues 127–147 traverse the membrane as a helical segment; the sequence is SVILVMLLGPLLFLACQLFVI. The Extracellular segment spans residues 148–181; the sequence is NMKEILRTKEYEGNMTWKIKLRSAMYLSDATITT. The N-linked (GlcNAc...) asparagine glycan is linked to N161. The helical transmembrane segment at 182–202 threads the bilayer; that stretch reads LANLVPFTLTLLSFLLLICSL. Residues 203-229 are Cytoplasmic-facing; the sequence is CKHLNKMQLHGKGSQDPSTKVHIKVLQ. A helical membrane pass occupies residues 230–250; it reads TVISFLLLCAIYFLSIMISVW. The Extracellular portion of the chain corresponds to 251-259; the sequence is SFGSLENKP. Residues 260–280 form a helical membrane-spanning segment; the sequence is VFMFCKAIRFSYPSIHPFILI. At 281–309 the chain is on the cytoplasmic side; the sequence is WGNKKLKQTFLSVLRQVRYWVKGEKPSSP.

The protein belongs to the G-protein coupled receptor T2R family.

It is found in the membrane. Its function is as follows. Receptor that may play a role in the perception of bitterness and is gustducin-linked. May play a role in sensing the chemical composition of the gastrointestinal content. The activity of this receptor may stimulate alpha gustducin, mediate PLC-beta-2 activation and lead to the gating of TRPM5. This is Taste receptor type 2 member 31 (TAS2R31) from Pongo pygmaeus (Bornean orangutan).